We begin with the raw amino-acid sequence, 172 residues long: Ribosome maturation factor RimM (172 aa).

Positions 98–171 (PGEYYYHQIV…KVIVELMEGL (74 aa)) constitute a PRC barrel domain.

The protein belongs to the RimM family. Binds ribosomal protein uS19.

The protein localises to the cytoplasm. An accessory protein needed during the final step in the assembly of 30S ribosomal subunit, possibly for assembly of the head region. Essential for efficient processing of 16S rRNA. May be needed both before and after RbfA during the maturation of 16S rRNA. It has affinity for free ribosomal 30S subunits but not for 70S ribosomes. The sequence is that of Ribosome maturation factor RimM from Levilactobacillus brevis (strain ATCC 367 / BCRC 12310 / CIP 105137 / JCM 1170 / LMG 11437 / NCIMB 947 / NCTC 947) (Lactobacillus brevis).